We begin with the raw amino-acid sequence, 299 residues long: Tyrosine recombinase XerC (299 aa).

In terms of domain architecture, Core-binding (CB) spans 1 to 85 (MDQHLDAYCM…AVRGFYKYLN (85 aa)). The region spanning 106 to 285 (RLPKTLDTDR…DFQHLATVYD (180 aa)) is the Tyr recombinase domain. Active-site residues include R146, K170, H237, R240, and H263. Y272 acts as the O-(3'-phospho-DNA)-tyrosine intermediate in catalysis.

Belongs to the 'phage' integrase family. XerC subfamily. In terms of assembly, forms a cyclic heterotetrameric complex composed of two molecules of XerC and two molecules of XerD.

Its subcellular location is the cytoplasm. Functionally, site-specific tyrosine recombinase, which acts by catalyzing the cutting and rejoining of the recombining DNA molecules. The XerC-XerD complex is essential to convert dimers of the bacterial chromosome into monomers to permit their segregation at cell division. It also contributes to the segregational stability of plasmids. The chain is Tyrosine recombinase XerC from Pseudomonas syringae pv. syringae (strain B728a).